Consider the following 452-residue polypeptide: Protein CLT3, chloroplastic (452 aa).

A chloroplast-targeting transit peptide spans 1 to 34 (MATTSRRFTTGLFASITSVKSHSANRPQSISLIR). The next 10 helical transmembrane spans lie at 105-125 (AEIV…RVMY), 137-157 (FFLA…ILYF), 175-195 (PFLI…AAAA), 202-222 (TTVL…IFLG), 230-250 (ILGC…GSGA), 258-278 (GVLW…GTVL), 307-327 (FQAI…GIPF), 353-373 (GAPF…IALL), 389-409 (TVSV…LGVA), and 412-432 (LPKG…LYSW).

This sequence belongs to the CRT-like transporter family.

Its subcellular location is the plastid. The protein localises to the chloroplast membrane. Involved in thiol transport from the plastid to the cytosol. Transports probably both glutathione (GSH) and its precursor, gamma-glutamylcysteine (gamma-EC). Exhibits some functional redundancy with CLT1 in maintaining the root GSH pool. This is Protein CLT3, chloroplastic from Arabidopsis thaliana (Mouse-ear cress).